The primary structure comprises 255 residues: Epoxyqueuosine reductase QueH (255 aa).

4 residues coordinate [4Fe-4S] cluster: C44, C45, C128, and C131. A disulfide bond links C210 and C212.

Belongs to the QueH family.

It catalyses the reaction epoxyqueuosine(34) in tRNA + AH2 = queuosine(34) in tRNA + A + H2O. It participates in tRNA modification; tRNA-queuosine biosynthesis. In terms of biological role, catalyzes the conversion of epoxyqueuosine (oQ) to queuosine (Q), which is a hypermodified base found in the wobble positions of tRNA(Asp), tRNA(Asn), tRNA(His) and tRNA(Tyr). The chain is Epoxyqueuosine reductase QueH from Streptococcus pyogenes serotype M1.